Here is a 157-residue protein sequence, read N- to C-terminus: MILTIDFTDETNEVAAQHTELVEKLLQHAASVESIEPETEVSVTFVTNDTIQDINREYRGKDQPTDVISFALEELGEGEMAVTFEGMPRVLGDIIISTDRAKEQAEEYNHSFERELGFLAVHGFLHLLGYDHMEPEEEKVMFTKQDEILQTFGLGRD.

The Zn(2+) site is built by His-122, His-126, and His-132.

It belongs to the endoribonuclease YbeY family. The cofactor is Zn(2+).

The protein resides in the cytoplasm. Single strand-specific metallo-endoribonuclease involved in late-stage 70S ribosome quality control and in maturation of the 3' terminus of the 16S rRNA. In Lysinibacillus sphaericus (strain C3-41), this protein is Endoribonuclease YbeY.